A 933-amino-acid polypeptide reads, in one-letter code: Anoctamin-7 (933 aa).

Residues 1-355 lie on the Cytoplasmic side of the membrane; it reads MRMAATAWAG…YFAWLGFYTG (355 aa). The segment at 43–101 is disordered; sequence ETSSGSHCARSRMLRRRAQEEDSTVLIDVSPPEAEKRGSYGSTAHASEPGGQQAAACRA. A helical membrane pass occupies residues 356 to 376; sequence WLLPAAVVGTLVFLVGCFLVF. Over 377 to 420 the chain is Extracellular; that stretch reads SDIPTQELCGSKDSFEMCPLCLDCPFWLLSSACALAQAGRLFDH. The helical transmembrane segment at 421-441 threads the bilayer; it reads GGTVFFSLFMALWAVLLLEYW. At 442-499 the chain is on the cytoplasmic side; the sequence is KRKSATLAYRWDCSDYEDTEERPRPQFAASAPMTAPNPITGEDEPYFPERSRARRMLA. Residues 500 to 520 traverse the membrane as a helical segment; it reads GSVVIVVMVAVVVMCLVSIIL. At 521 to 550 the chain is on the extracellular side; it reads YRAIMAIVVSRSGNTLLAAWASRIASLTGS. The helical transmembrane segment at 551-571 threads the bilayer; that stretch reads VVNLVFILILSKIYVSLAHVL. At 572 to 588 the chain is on the cytoplasmic side; it reads TRWEMHRTQTKFEDAFT. A helical transmembrane segment spans residues 589-609; the sequence is LKVFIFQFVNFYSSPVYIAFF. Over 610-714 the chain is Extracellular; that stretch reads KGRFVGYPGN…FDEYLEMVLQ (105 aa). A helical transmembrane segment spans residues 715–735; sequence FGFVTIFVAACPLAPLFALLN. Over 736–763 the chain is Cytoplasmic; it reads NWVEIRLDARKFVCEYRRPVAERAQDIG. The chain crosses the membrane as a helical span at residues 764–784; it reads IWFHILAGLTHLAVISNAFLL. Residues 785–843 are Extracellular-facing; the sequence is AFSSDFLPRAYYRWTRAHDLRGFLNFTLARAPSSFAAAHNRTCRYRAFRDDDGHYSQTY. N-linked (GlcNAc...) asparagine glycosylation is found at Asn809 and Asn824. Residues 844–864 traverse the membrane as a helical segment; the sequence is WNLLAIRLAFVIVFEHVVFSV. At 865-933 the chain is on the cytoplasmic side; it reads GRLLDLLVPD…TVPKASQLQQ (69 aa). The disordered stretch occupies residues 902 to 933; the sequence is GTNGTKDEQPEGSELSSHWTPFTVPKASQLQQ. Over residues 915 to 933 the composition is skewed to polar residues; it reads ELSSHWTPFTVPKASQLQQ.

Belongs to the anoctamin family. As to expression, specifically expressed in epithelial cells of the prostate (at protein level).

Its subcellular location is the cell membrane. The protein resides in the cell junction. The protein localises to the endoplasmic reticulum. It localises to the cytoplasm. It is found in the cytosol. The catalysed reaction is a 1,2-diacyl-sn-glycero-3-phospho-L-serine(in) = a 1,2-diacyl-sn-glycero-3-phospho-L-serine(out). It carries out the reaction a beta-D-galactosyl-(1&lt;-&gt;1')-N-acylsphing-4-enine(out) = a beta-D-galactosyl-(1&lt;-&gt;1')-N-acylsphing-4-enine(in). It catalyses the reaction a 1,2-diacyl-sn-glycero-3-phosphocholine(in) = a 1,2-diacyl-sn-glycero-3-phosphocholine(out). Functionally, has calcium-dependent phospholipid scramblase activity; scrambles phosphatidylserine, phosphatidylcholine and galactosylceramide. Does not exhibit calcium-activated chloride channel (CaCC) activity. May play a role in cell-cell interactions. This Homo sapiens (Human) protein is Anoctamin-7 (ANO7).